A 331-amino-acid chain; its full sequence is MAVFTAVTEPQLAEWMSHYDLGDVVEFRGISSGIENSNFFLTTTRGEYVLTIFEKLTAEQLPFYLDLMRHLAAHRVPVPDPMPREDGALFGTLHGKPAAIVTKLEGAPELAPGVEHCIEVGQMLARMHLAGRDYTGYQPNLRSLPWWRETVPTILPFLQGEQRELLSSELAHQEAFFASADYAALPEGPCHADLFRDNAMFAHAAPDTGHEVRLGGFFDFYFAGCDKWLFDVAVTVNDWCVDLATGKLDNARTEAMLRAYQTVRPFTAEENRHWGDMLRAGAYRFWVSRLYDFYLPRAAELLKPHDPGHFERILRERLTGVALPGIHTSCN.

Belongs to the pseudomonas-type ThrB family.

The enzyme catalyses L-homoserine + ATP = O-phospho-L-homoserine + ADP + H(+). The protein operates within amino-acid biosynthesis; L-threonine biosynthesis; L-threonine from L-aspartate: step 4/5. The protein is Homoserine kinase of Paraburkholderia phytofirmans (strain DSM 17436 / LMG 22146 / PsJN) (Burkholderia phytofirmans).